A 321-amino-acid chain; its full sequence is Putative glucan endo-1,3-beta-glucosidase GVI (321 aa).

The signal sequence occupies residues 1 to 6; the sequence is LAGVEG. Residue Glu-100 is the Proton donor of the active site. Glu-241 (nucleophile) is an active-site residue.

The protein belongs to the glycosyl hydrolase 17 family.

It carries out the reaction Hydrolysis of (1-&gt;3)-beta-D-glucosidic linkages in (1-&gt;3)-beta-D-glucans.. In terms of biological role, may provide a degree of protection against microbial invasion of germinated barley grain through its ability to degrade fungal cell wall polysaccharides. This chain is Putative glucan endo-1,3-beta-glucosidase GVI, found in Hordeum vulgare (Barley).